The sequence spans 431 residues: MRWSEIGCTMKSVNIEWNVNLRQAFFCIARALDSVGVDDINHGHRVGYMAYSCAQAMEWSEEECQLVFALGLIHDCGVAQKRDFYRLLENMQPDNTQQHCVRGNELLSNCPPLAPFADAILYHHTPWDELKNIAISDRNKRFAALIFLADRVDYLKELYPRDEYGNVTQEARNQVCLEIGRLSGSLFERDLVRTMQHLLSKEFIWFSMEHHHIEAMGHNLPSTPFFEQKLGVEEIMSIAMLMANVVDAKSQFTFQHSQKVAELCQHLAKELGLNVEMQKALYLTGLVHDIGKLHTPEEILHKPGKLNESEYLCIQRHSTDSRYTLQMVFGQSVVCEWAGNHHERLDGSGYPRGLQGAAIDLPSRIIAIADVFQALTQARPYRGSMSLNEVMNIMRHEVSCGRLDSQVFDVIVRNSQQYYQLSIAESPTEWA.

The HD domain occupies 39 to 155 (DINHGHRVGY…IFLADRVDYL (117 aa)). An HD-GYP domain is found at 231–427 (GVEEIMSIAM…YYQLSIAESP (197 aa)). A divalent metal cation is bound by residues His288 and Asp289. Lys292 acts as the Proton donor in catalysis. His317, His341, His342, and Asp370 together coordinate a divalent metal cation.

As to quaternary structure, monomer. The cofactor is Ca(2+). It depends on Mg(2+) as a cofactor.

It carries out the reaction 3',3'-cGAMP + H2O = 5'-pApG-3' + H(+). The enzyme catalyses 5'-pApG-3' + H2O = 5'-ApG-3' + phosphate. Functionally, phosphodiesterase (PDE) that catalyzes the hydrolysis of 3'3'-cyclic GMP-AMP (3'3'-cGAMP), leading to linear 5'-pApG. Also displays 5'-nucleotidase activity, further hydrolyzing 5'-pApG to 5'-ApG. Counteracts the function of the 3'3'-cGAMP synthase DncV, and is involved in the modulation of intracellular 3'3'-cGAMP levels. Enhances bacterial chemotaxis and inhibits intestinal colonization in vivo. Thus exerts a crucial role in regulating bacterial infectivity through catalyzing 3'3'-cGAMP degradation. Is specific for 3'3'-cGAMP since it cannot degrade other cGAMP linkage isomers (3'2'-, 2'3'-, and 2'2'-cGAMPs). Is also able to hydrolyze c-di-GMP but not c-di-AMP. The protein is 3'3'-cGAMP-specific phosphodiesterase 1 of Vibrio cholerae serotype O1 (strain ATCC 39315 / El Tor Inaba N16961).